The following is a 711-amino-acid chain: Ribosomal RNA large subunit methyltransferase K/L (711 aa).

The region spanning 43-154 (TLYRTLLWSR…RENLVISLDL (112 aa)) is the THUMP domain.

It belongs to the methyltransferase superfamily. RlmKL family.

The protein resides in the cytoplasm. The catalysed reaction is guanosine(2445) in 23S rRNA + S-adenosyl-L-methionine = N(2)-methylguanosine(2445) in 23S rRNA + S-adenosyl-L-homocysteine + H(+). It catalyses the reaction guanosine(2069) in 23S rRNA + S-adenosyl-L-methionine = N(2)-methylguanosine(2069) in 23S rRNA + S-adenosyl-L-homocysteine + H(+). Functionally, specifically methylates the guanine in position 2445 (m2G2445) and the guanine in position 2069 (m7G2069) of 23S rRNA. This is Ribosomal RNA large subunit methyltransferase K/L from Haemophilus influenzae (strain ATCC 51907 / DSM 11121 / KW20 / Rd).